Reading from the N-terminus, the 320-residue chain is tRNA U34 carboxymethyltransferase (320 aa).

Carboxy-S-adenosyl-L-methionine-binding positions include lysine 87, tryptophan 101, lysine 106, glycine 126, 148-150 (EPS), 176-177 (VE), methionine 192, tyrosine 196, and arginine 311.

The protein belongs to the class I-like SAM-binding methyltransferase superfamily. CmoB family. In terms of assembly, homotetramer.

It carries out the reaction carboxy-S-adenosyl-L-methionine + 5-hydroxyuridine(34) in tRNA = 5-carboxymethoxyuridine(34) in tRNA + S-adenosyl-L-homocysteine + H(+). Catalyzes carboxymethyl transfer from carboxy-S-adenosyl-L-methionine (Cx-SAM) to 5-hydroxyuridine (ho5U) to form 5-carboxymethoxyuridine (cmo5U) at position 34 in tRNAs. The protein is tRNA U34 carboxymethyltransferase of Desulfotalea psychrophila (strain LSv54 / DSM 12343).